The following is a 911-amino-acid chain: Protein translocase subunit SecA (911 aa).

Residues glutamine 87, 105–109, and aspartate 513 each bind ATP; that span reads GEGKT. The interval 853 to 911 is disordered; sequence IQLQHEQVSGLEPEAGEAPSAGEPRSEQPYVRAGRKVGRNDPCPCGSGKKFKACHGKLG. Low complexity predominate over residues 862 to 875; it reads GLEPEAGEAPSAGE. Positions 895, 897, 906, and 907 each coordinate Zn(2+). Residues 901-911 show a composition bias toward basic residues; sequence KKFKACHGKLG.

This sequence belongs to the SecA family. Monomer and homodimer. Part of the essential Sec protein translocation apparatus which comprises SecA, SecYEG and auxiliary proteins SecDF-YajC and YidC. Requires Zn(2+) as cofactor.

Its subcellular location is the cell inner membrane. The protein localises to the cytoplasm. It carries out the reaction ATP + H2O + cellular proteinSide 1 = ADP + phosphate + cellular proteinSide 2.. Its function is as follows. Part of the Sec protein translocase complex. Interacts with the SecYEG preprotein conducting channel. Has a central role in coupling the hydrolysis of ATP to the transfer of proteins into and across the cell membrane, serving both as a receptor for the preprotein-SecB complex and as an ATP-driven molecular motor driving the stepwise translocation of polypeptide chains across the membrane. This Teredinibacter turnerae (strain ATCC 39867 / T7901) protein is Protein translocase subunit SecA.